The primary structure comprises 197 residues: Cell division protein SepF (197 aa).

The disordered stretch occupies residues 15-89; sequence EEEEVEGPEE…RMNNNSKNNS (75 aa). Basic and acidic residues predominate over residues 22–42; the sequence is PEERESSRSRERVQEREDYNR. A compositionally biased stretch (polar residues) spans 43 to 73; it reads NENQATPQTFNNKQQAIKSVPQKNTLRSNTT. The span at 80 to 89 shows a compositional bias: low complexity; that stretch reads RMNNNSKNNS.

This sequence belongs to the SepF family. Homodimer. Interacts with FtsZ.

The protein localises to the cytoplasm. Functionally, cell division protein that is part of the divisome complex and is recruited early to the Z-ring. Probably stimulates Z-ring formation, perhaps through the cross-linking of FtsZ protofilaments. Its function overlaps with FtsA. The polypeptide is Cell division protein SepF (Staphylococcus epidermidis (strain ATCC 35984 / DSM 28319 / BCRC 17069 / CCUG 31568 / BM 3577 / RP62A)).